Reading from the N-terminus, the 465-residue chain is Argininosuccinate lyase (465 aa).

The protein belongs to the lyase 1 family. Argininosuccinate lyase subfamily.

The protein localises to the cytoplasm. It catalyses the reaction 2-(N(omega)-L-arginino)succinate = fumarate + L-arginine. It participates in amino-acid biosynthesis; L-arginine biosynthesis; L-arginine from L-ornithine and carbamoyl phosphate: step 3/3. This Variovorax paradoxus (strain S110) protein is Argininosuccinate lyase.